Here is a 260-residue protein sequence, read N- to C-terminus: Ribosomal RNA small subunit methyltransferase J (260 aa).

Residues 125–126 (ER) and Asp-179 each bind S-adenosyl-L-methionine. Residues 234–260 (IDGPKPSHALDGKSSRYDIYPKKALKP) form a disordered region. Positions 241–254 (HALDGKSSRYDIYP) are enriched in basic and acidic residues.

The protein belongs to the methyltransferase superfamily. RsmJ family.

It localises to the cytoplasm. It catalyses the reaction guanosine(1516) in 16S rRNA + S-adenosyl-L-methionine = N(2)-methylguanosine(1516) in 16S rRNA + S-adenosyl-L-homocysteine + H(+). Specifically methylates the guanosine in position 1516 of 16S rRNA. The polypeptide is Ribosomal RNA small subunit methyltransferase J (Pseudomonas fluorescens (strain SBW25)).